A 652-amino-acid chain; its full sequence is RNA-binding E3 ubiquitin-protein ligase MEX3C (652 aa).

Disordered stretches follow at residues 15–39 (AAPA…ELEG) and 80–136 (QARR…EDRP). Over residues 18-33 (APLPQPPPLPPPPPAG) the composition is skewed to pro residues. Over residues 101–134 (AELELEVDEEEGEEAELDGELLEEEELEEAEEED) the composition is skewed to acidic residues. KH domains are found at residues 225–286 (TTEC…KREI) and 319–380 (QTTV…REEI). Disordered regions lie at residues 429–448 (ARMM…SGST) and 506–566 (FEPV…HVGL). Residues 430 to 448 (RMMSNYRNDSSSSLGSGST) show a composition bias toward low complexity. Polar residues predominate over residues 519–537 (PSGNMKTQRRGSQPSTPRL). 2 positions are modified to phosphoserine: serine 530 and serine 538. Residues 544–555 (SIEHPLARRVRS) show a composition bias toward basic and acidic residues. Residues 601–641 (CVICFENEVIAALVPCGHNLFCMECANKICEKRTPSCPVCQ) form an RING-type zinc finger.

In terms of assembly, interacts with USP7, which antagonizes the ability to degrade mRNA. Post-translationally, phosphorylated.

Its subcellular location is the nucleus. The protein resides in the cytoplasm. The catalysed reaction is S-ubiquitinyl-[E2 ubiquitin-conjugating enzyme]-L-cysteine + [acceptor protein]-L-lysine = [E2 ubiquitin-conjugating enzyme]-L-cysteine + N(6)-ubiquitinyl-[acceptor protein]-L-lysine.. In terms of biological role, RNA-binding protein. May be involved in post-transcriptional regulatory mechanisms, modulating levels of some mRNAs by promoting their degradation in a way involving ubiquitin ligase activity. May act as suppressor of replication stress and chromosome missegregation. This is RNA-binding E3 ubiquitin-protein ligase MEX3C (Mex3c) from Mus musculus (Mouse).